We begin with the raw amino-acid sequence, 300 residues long: Ribosomal protein L11 methyltransferase (300 aa).

Positions 144, 165, 187, and 235 each coordinate S-adenosyl-L-methionine.

This sequence belongs to the methyltransferase superfamily. PrmA family.

It is found in the cytoplasm. The catalysed reaction is L-lysyl-[protein] + 3 S-adenosyl-L-methionine = N(6),N(6),N(6)-trimethyl-L-lysyl-[protein] + 3 S-adenosyl-L-homocysteine + 3 H(+). Its function is as follows. Methylates ribosomal protein L11. The polypeptide is Ribosomal protein L11 methyltransferase (Prochlorococcus marinus (strain MIT 9515)).